The primary structure comprises 151 residues: Kinetoplast-associated protein 1 (151 aa).

Residues 1–9 (MLRVSVRSL) constitute a propeptide that is removed on maturation. Residues 13 to 151 (ASSKAGSKAA…KKGAAKKAHK (139 aa)) are disordered. 3 stretches are compositionally biased toward low complexity: residues 15-49 (SKAG…VPPV), 70-91 (AAAA…TPAK), and 101-111 (SKPSAPKQAAG). Residues 112-151 (KMRKAAGKAQRKIKAAARKAAPKKMAKSFGKKGAAKKAHK) show a composition bias toward basic residues.

Belongs to the KAP family. Associates with the kinetoplast DNA network.

The protein resides in the mitochondrion matrix. It is found in the kinetoplast. Histone H1-like DNA-binding protein involved in the organization and segregation of kinetoplast DNA (kDNA). The mitochondrial DNA of kinetoplastid protozoa consists of about 5,000 minicircles and 20 to 30 maxicircles. These circular DNAs are held together by catenation into a highly organized compact disk structure referred to as a kinetoplast DNA (kDNA) network. Binds preferentially to a specific fragment of minicircle DNA and is able to compact kDNA networks through DNA charge neutralization and condensation. This is Kinetoplast-associated protein 1 (KAP4) from Crithidia fasciculata.